The chain runs to 251 residues: MPLQNVKVADEGTVNFQKVKEECITAVESLHKVVACYRHLVLTIGGSSDSIHLRDELRRTRERAQELAVCNRNKLTTALRDKKLSKKDCEELERLWVEFSSCLELFHNDMCKVYELATALPHSSTNQPAIQTGSTGNTSAIASRALNVQNINYSDSPANKASLEYQEIEEEILKVDNMITDMEMKVNVLRWTVEANTRMNDELKSTHDSSSVVLLSEEESNSKGCCSDGQLIVSLLLCGTALVAITLYSIL.

The Cytoplasmic portion of the chain corresponds to 1–230; the sequence is MPLQNVKVAD…NSKGCCSDGQ (230 aa). Coiled-coil stretches lie at residues 53–94 and 158–187; these read LRDE…ELER and ANKASLEYQEIEEEILKVDNMITDMEMKVN. The chain crosses the membrane as a helical; Anchor for type IV membrane protein span at residues 231–250; sequence LIVSLLLCGTALVAITLYSI. Position 251 (Leu251) is a topological domain, extracellular.

The protein belongs to the RGS7BP/RGS9BP family.

The protein localises to the membrane. Functionally, regulator of G protein-coupled receptor (GPCR) signaling. Probably acts by regulating the activity of some 'R7' family protein (RGS6, RGS7, RGS9 and/or RGS11). The protein is Regulator of G-protein signaling 9-binding protein C (rgs9bp-c) of Xenopus laevis (African clawed frog).